Here is a 244-residue protein sequence, read N- to C-terminus: Type III pantothenate kinase (244 aa).

8–15 (DQGNSACK) contributes to the ATP binding site. 94–97 (GADR) provides a ligand contact to substrate. The active-site Proton acceptor is the Asp96. Residue Asp117 coordinates K(+). Thr120 provides a ligand contact to ATP. A substrate-binding site is contributed by Thr175.

Belongs to the type III pantothenate kinase family. In terms of assembly, homodimer. Requires NH4(+) as cofactor. It depends on K(+) as a cofactor.

Its subcellular location is the cytoplasm. It catalyses the reaction (R)-pantothenate + ATP = (R)-4'-phosphopantothenate + ADP + H(+). It participates in cofactor biosynthesis; coenzyme A biosynthesis; CoA from (R)-pantothenate: step 1/5. Catalyzes the phosphorylation of pantothenate (Pan), the first step in CoA biosynthesis. In Porphyromonas gingivalis (strain ATCC 33277 / DSM 20709 / CIP 103683 / JCM 12257 / NCTC 11834 / 2561), this protein is Type III pantothenate kinase.